Here is a 1893-residue protein sequence, read N- to C-terminus: Serine-aspartate repeat-containing protein I (1893 aa).

The first 54 residues, 1-54, serve as a signal peptide directing secretion; sequence MNFKGVKLLKNSKKRLDFLPNTLNKYSIRKFTVGTASILVGATLFLGVSNEAEA. Residues 53–333 form a disordered region; the sequence is EAAEKIDSPT…AHGINNKNKQ (281 aa). A compositionally biased stretch (basic and acidic residues) spans 54–222; that stretch reads AAEKIDSPTK…AEEPATKEEA (169 aa). Tandem repeats lie at residues 72 to 83, 84 to 95, 96 to 107, 108 to 119, 120 to 131, 132 to 143, 144 to 155, 156 to 167, 168 to 179, 180 to 191, 192 to 203, 204 to 215, 216 to 227, 228 to 239, 240 to 251, 252 to 263, 264 to 275, 276 to 287, 288 to 299, 300 to 311, and 312 to 323. The 21 X 12 AA tandem repeat of [AP]-[AE]-T-K-E-[EK]-A-[AV]-[IT]-[AST]-E-E stretch occupies residues 72 to 323; sequence AATKEEAATT…TKEKAVTSEE (252 aa). Residues 240-284 are compositionally biased toward basic and acidic residues; the sequence is PATKEEAAIAEEAATKEKAVTSEEAATKEKAAIAEEAATKEKAAI. Over residues 286–302 the composition is skewed to acidic residues; it reads EEPETKEEAATTEEPET. Positions 312-325 are enriched in basic and acidic residues; sequence PATKEKAVTSEEAH. A ligand binding A region region spans residues 324 to 755; the sequence is AHGINNKNKQ…GSSTAQGDNP (432 aa). 2 consecutive CNA-B domains span residues 756 to 874 and 875 to 984; these read TYNL…YETP and KYSL…YFDE. Positions 941-1867 are disordered; sequence KPEGLTQTTT…GNNTQNNGTL (927 aa). Residues 955-975 show a composition bias toward basic and acidic residues; that stretch reads DENKDADGEEVHVTITDHDDF. The segment covering 981–1836 has biased composition (acidic residues); the sequence is YFDEDSDADA…DSDADADADS (856 aa). The segment covering 1837–1851 has biased composition (basic and acidic residues); that stretch reads DADKYHNDTADKSND. Residues 1854 to 1858 carry the LPXTG sorting signal motif; it reads LPDTG. Pentaglycyl murein peptidoglycan amidated threonine is present on T1857. The propeptide at 1858-1893 is removed by sortase; sequence GNNTQNNGTLFGSLFAALGGLFLVGSRRKNKNNEEK.

Belongs to the serine-aspartate repeat-containing protein (SDr) family.

Its subcellular location is the secreted. The protein localises to the cell wall. Its function is as follows. Responsible for collagen binding by S.saprophyticus. This chain is Serine-aspartate repeat-containing protein I (sdrI), found in Staphylococcus saprophyticus.